The chain runs to 171 residues: Large ribosomal subunit protein uL10 (171 aa).

This sequence belongs to the universal ribosomal protein uL10 family. In terms of assembly, part of the ribosomal stalk of the 50S ribosomal subunit. The N-terminus interacts with L11 and the large rRNA to form the base of the stalk. The C-terminus forms an elongated spine to which L12 dimers bind in a sequential fashion forming a multimeric L10(L12)X complex.

Its function is as follows. Forms part of the ribosomal stalk, playing a central role in the interaction of the ribosome with GTP-bound translation factors. This is Large ribosomal subunit protein uL10 from Cereibacter sphaeroides (strain ATCC 17023 / DSM 158 / JCM 6121 / CCUG 31486 / LMG 2827 / NBRC 12203 / NCIMB 8253 / ATH 2.4.1.) (Rhodobacter sphaeroides).